Here is a 280-residue protein sequence, read N- to C-terminus: Probable endonuclease 4 (280 aa).

The Zn(2+) site is built by His-68, His-108, Glu-143, Asp-177, His-180, His-214, Asp-227, His-229, and Glu-259.

It belongs to the AP endonuclease 2 family. The cofactor is Zn(2+).

The enzyme catalyses Endonucleolytic cleavage to 5'-phosphooligonucleotide end-products.. Its function is as follows. Endonuclease IV plays a role in DNA repair. It cleaves phosphodiester bonds at apurinic or apyrimidinic (AP) sites, generating a 3'-hydroxyl group and a 5'-terminal sugar phosphate. This chain is Probable endonuclease 4, found in Cenarchaeum symbiosum (strain A).